We begin with the raw amino-acid sequence, 452 residues long: Pentatricopeptide repeat-containing protein At2g30780 (452 aa).

7 PPR repeats span residues 137–171 (TASV…THCA), 173–207 (TVVT…KLPP), 208–242 (NSVT…PVEP), 243–273 (DTDT…IKDQ), 350–384 (KSSI…GWKL), 385–419 (CRSL…NYGL), and 420–452 (VTKT…KRGL).

This sequence belongs to the PPR family. P subfamily.

The chain is Pentatricopeptide repeat-containing protein At2g30780 from Arabidopsis thaliana (Mouse-ear cress).